Consider the following 58-residue polypeptide: Large ribosomal subunit protein uL30 (58 aa).

It belongs to the universal ribosomal protein uL30 family. In terms of assembly, part of the 50S ribosomal subunit.

This chain is Large ribosomal subunit protein uL30, found in Erythrobacter litoralis (strain HTCC2594).